Consider the following 299-residue polypeptide: Glutamyl-Q tRNA(Asp) synthetase (299 aa).

L-glutamate-binding positions include 18-22 (RFAPS) and glutamate 54. A 'HIGH' region motif is present at residues 21 to 31 (PSPSGALHFGS). Cysteine 110, cysteine 112, tyrosine 124, and cysteine 128 together coordinate Zn(2+). Residues tyrosine 181 and arginine 199 each contribute to the L-glutamate site. Residues 237-241 (KLSKQ) carry the 'KMSKS' region motif. Lysine 240 contributes to the ATP binding site.

Belongs to the class-I aminoacyl-tRNA synthetase family. GluQ subfamily. Requires Zn(2+) as cofactor.

Its function is as follows. Catalyzes the tRNA-independent activation of glutamate in presence of ATP and the subsequent transfer of glutamate onto a tRNA(Asp). Glutamate is transferred on the 2-amino-5-(4,5-dihydroxy-2-cyclopenten-1-yl) moiety of the queuosine in the wobble position of the QUC anticodon. The protein is Glutamyl-Q tRNA(Asp) synthetase of Shewanella oneidensis (strain ATCC 700550 / JCM 31522 / CIP 106686 / LMG 19005 / NCIMB 14063 / MR-1).